Consider the following 301-residue polypeptide: tRNA pseudouridine synthase B (301 aa).

Residue D45 is the Nucleophile of the active site.

This sequence belongs to the pseudouridine synthase TruB family. Type 1 subfamily.

The enzyme catalyses uridine(55) in tRNA = pseudouridine(55) in tRNA. Its function is as follows. Responsible for synthesis of pseudouridine from uracil-55 in the psi GC loop of transfer RNAs. The chain is tRNA pseudouridine synthase B from Streptomyces coelicolor (strain ATCC BAA-471 / A3(2) / M145).